A 318-amino-acid polypeptide reads, in one-letter code: MFTAVAPPQETLPRDLVGAIQSLKKELNAVILAHYYQEAAIQDIADYLGDSLGLSQQAASTDADVIVFAGVHFMAETAKILNPHKLVLLPDLEAGCSLADSCPPREFAEFKQRHPDHLVISYINCTAEIKALSDIICTSSNAVKIVQQLPPDQKIIFAPDRNLGRYVMEQTGREMVLWQGSCIVHETFSERRLLELKTQYPQAEIIAHPECEKAILRHADFIGSTTALLNYSGKSQGKEFIVGTEPGIIHQMEKLSPSKQFIPLPNNSNCDCNECPYMRLNTLEKLYWAMQRRSPEITLPEATMAAALKPIQRMLAMS.

Positions 34 and 51 each coordinate iminosuccinate. Position 96 (C96) interacts with [4Fe-4S] cluster. Iminosuccinate is bound by residues 122 to 124 (YIN) and S139. C182 provides a ligand contact to [4Fe-4S] cluster. Residues 208–210 (HPE) and T225 each bind iminosuccinate. Residue C275 participates in [4Fe-4S] cluster binding.

It belongs to the quinolinate synthase family. Type 2 subfamily. It depends on [4Fe-4S] cluster as a cofactor.

It is found in the cytoplasm. It catalyses the reaction iminosuccinate + dihydroxyacetone phosphate = quinolinate + phosphate + 2 H2O + H(+). It participates in cofactor biosynthesis; NAD(+) biosynthesis; quinolinate from iminoaspartate: step 1/1. Its function is as follows. Catalyzes the condensation of iminoaspartate with dihydroxyacetone phosphate to form quinolinate. This chain is Quinolinate synthase, found in Synechocystis sp. (strain ATCC 27184 / PCC 6803 / Kazusa).